The sequence spans 454 residues: tRNA modification GTPase MnmE (454 aa).

(6S)-5-formyl-5,6,7,8-tetrahydrofolate-binding residues include Arg-23, Glu-80, and Lys-120. One can recognise a TrmE-type G domain in the interval 216-377; it reads GMKVVIAGRP…LRNHLKQSMG (162 aa). Asn-226 is a binding site for K(+). GTP contacts are provided by residues 226-231, 245-251, 270-273, 335-338, and 358-360; these read NAGKSS, TDIAGTT, DTAG, NKAD, and SAR. A Mg(2+)-binding site is contributed by Ser-230. Thr-245, Ile-247, and Thr-250 together coordinate K(+). Position 251 (Thr-251) interacts with Mg(2+). Lys-454 provides a ligand contact to (6S)-5-formyl-5,6,7,8-tetrahydrofolate.

This sequence belongs to the TRAFAC class TrmE-Era-EngA-EngB-Septin-like GTPase superfamily. TrmE GTPase family. As to quaternary structure, homodimer. Heterotetramer of two MnmE and two MnmG subunits. K(+) serves as cofactor.

Its subcellular location is the cytoplasm. Functionally, exhibits a very high intrinsic GTPase hydrolysis rate. Involved in the addition of a carboxymethylaminomethyl (cmnm) group at the wobble position (U34) of certain tRNAs, forming tRNA-cmnm(5)s(2)U34. The protein is tRNA modification GTPase MnmE of Citrobacter koseri (strain ATCC BAA-895 / CDC 4225-83 / SGSC4696).